A 135-amino-acid chain; its full sequence is Large ribosomal subunit protein uL16c (135 aa).

It belongs to the universal ribosomal protein uL16 family. Part of the 50S ribosomal subunit.

Its subcellular location is the plastid. The protein resides in the chloroplast. The chain is Large ribosomal subunit protein uL16c from Platanus occidentalis (Sycamore).